The sequence spans 464 residues: ATP synthase subunit beta (464 aa).

151–158 (GGAGVGKT) contacts ATP.

Belongs to the ATPase alpha/beta chains family. In terms of assembly, F-type ATPases have 2 components, CF(1) - the catalytic core - and CF(0) - the membrane proton channel. CF(1) has five subunits: alpha(3), beta(3), gamma(1), delta(1), epsilon(1). CF(0) has three main subunits: a(1), b(2) and c(9-12). The alpha and beta chains form an alternating ring which encloses part of the gamma chain. CF(1) is attached to CF(0) by a central stalk formed by the gamma and epsilon chains, while a peripheral stalk is formed by the delta and b chains.

It is found in the cell membrane. The enzyme catalyses ATP + H2O + 4 H(+)(in) = ADP + phosphate + 5 H(+)(out). In terms of biological role, produces ATP from ADP in the presence of a proton gradient across the membrane. The catalytic sites are hosted primarily by the beta subunits. This Bacillus cytotoxicus (strain DSM 22905 / CIP 110041 / 391-98 / NVH 391-98) protein is ATP synthase subunit beta.